The chain runs to 212 residues: MNDVHDCLVWVNDPYFHPISKRPIKYKGPTWRHYDKKCDLLGITGPKATKSPSRRTTRSPSPSRRTTRSSPSRRTTRSSPSRRTTRSPSPSGRRKQGGPAVYCGNNALDEGLLDGSKVVGTRYQCLQKGVAVGLNNPVLHHSPNYQPIVDAKIYCGTGSKLPASKLRFGTPTECMGKGYQIGQNKRFQQSGLQQGPYIWEEDGWYKIIVPKN.

Residues 42–101 form a disordered region; it reads GITGPKATKSPSRRTTRSPSPSRRTTRSSPSRRTTRSSPSRRTTRSPSPSGRRKQGGPAV. A compositionally biased stretch (low complexity) spans 58 to 91; sequence RSPSPSRRTTRSSPSRRTTRSSPSRRTTRSPSPS.

It belongs to the IIV-6 378R family.

This is an uncharacterized protein from Invertebrate iridescent virus 3 (IIV-3).